The following is a 317-amino-acid chain: Melanocyte-stimulating hormone receptor (317 aa).

Residues 1-37 (MPVQGSQRRLLGSLNSTPTATPRLGLAANQTGARCLE) are Extracellular-facing. Asparagine 29 is a glycosylation site (N-linked (GlcNAc...) asparagine). A helical transmembrane segment spans residues 38-63 (VSIPDGLFLSLGLVSLVENVLVVVAI). The Cytoplasmic portion of the chain corresponds to 64–72 (ARNRNLHSP). Residues 73–93 (MYCFICCLALSDLLVSGSNML) form a helical membrane-spanning segment. Residues 94–118 (ETAVILLLEAGALAARAAVVQQLDN) are Extracellular-facing. Residues 119–140 (VIDVITCSSMLSSLCFLGAIAV) traverse the membrane as a helical segment. Over 141-163 (DRYISIFYALRYHSIVTLRRARR) the chain is Cytoplasmic. The helical transmembrane segment at 164–183 (VVAAIWVASVLFSTLFIAYC) threads the bilayer. The Extracellular segment spans residues 184 to 191 (DHAAVLLS). A helical membrane pass occupies residues 192 to 211 (LVVFFLAMLVLMAVLYVHML). Over 212 to 240 (ARACQHAQGIAQLHKRQRPAHQGVGLKGA) the chain is Cytoplasmic. The helical transmembrane segment at 241 to 266 (ATLTILLGIFFLCWGPFFLHLTLIVL) threads the bilayer. At 267–279 (CPQHPTCSCIFKN) the chain is on the extracellular side. The chain crosses the membrane as a helical span at residues 280-300 (FNLFLTLIICNAIIDPLIYAF). Topologically, residues 301 to 317 (RSQELRRTLKKVLLCSW) are cytoplasmic. The S-palmitoyl cysteine moiety is linked to residue cysteine 315.

It belongs to the G-protein coupled receptor 1 family. As to quaternary structure, interacts with MGRN1, but does not undergo MGRN1-mediated ubiquitination; this interaction competes with GNAS-binding and thus inhibits agonist-induced cAMP production. Interacts with OPN3; the interaction results in a decrease in MC1R-mediated cAMP signaling and ultimately a decrease in melanin production in melanocytes.

The protein localises to the cell membrane. Its function is as follows. Receptor for MSH (alpha, beta and gamma) and ACTH. The activity of this receptor is mediated by G proteins which activate adenylate cyclase. Mediates melanogenesis, the production of eumelanin (black/brown) and phaeomelanin (red/yellow), via regulation of cAMP signaling in melanocytes. The sequence is that of Melanocyte-stimulating hormone receptor (MC1R) from Trachypithecus auratus (Javan langur).